The primary structure comprises 144 residues: Ig heavy chain V region M167 (144 aa).

An N-terminal signal peptide occupies residues 1-19 (MKMWLNWVFLLTLLHGIQC). The Ig-like domain occupies 20 to 133 (EVKVVESGGG…GNSYFGYFDV (114 aa)).

This chain is Ig heavy chain V region M167, found in Mus musculus (Mouse).